We begin with the raw amino-acid sequence, 174 residues long: Squamosa promoter-binding-like protein 4 (174 aa).

The tract at residues 1–42 (MEGKRSQGQGYMKKKSYLVEEDMETDTDEEEEVGRDRVRGSR) is disordered. Over residues 19–33 (VEEDMETDTDEEEEV) the composition is skewed to acidic residues. An SBP-type zinc finger spans residues 51 to 128 (LRLCQVDRCT…AGHNERRRKS (78 aa)). Zn(2+) contacts are provided by Cys54, Cys59, Cys76, His79, Cys95, Cys98, His102, and Cys114. The Bipartite nuclear localization signal signature appears at 111 to 127 (KRSCRRRLAGHNERRRK). Basic residues predominate over residues 118–127 (LAGHNERRRK). Disordered stretches follow at residues 118–148 (LAGHNERRRKSSGESTYGEGSGRRGINGQVV) and 155–174 (SRVEMTLPMPNSSFKRPQIR). Residues 163–174 (MPNSSFKRPQIR) are compositionally biased toward polar residues.

Zn(2+) is required as a cofactor. As to expression, expressed in the rib meristem and inter-primordial tissue of the inflorescence apex.

The protein localises to the nucleus. The protein resides in the cytoplasm. In terms of biological role, trans-acting factor that binds specifically to the consensus nucleotide sequence 5'-TNCGTACAA-3' of AP1 promoter. Promotes both vegetative phase change and flowering. In Arabidopsis thaliana (Mouse-ear cress), this protein is Squamosa promoter-binding-like protein 4 (SPL4).